Consider the following 179-residue polypeptide: Large ribosomal subunit protein uL5 (179 aa).

This sequence belongs to the universal ribosomal protein uL5 family. In terms of assembly, part of the 50S ribosomal subunit; part of the 5S rRNA/L5/L18/L25 subcomplex. Contacts the 5S rRNA and the P site tRNA. Forms a bridge to the 30S subunit in the 70S ribosome.

Its function is as follows. This is one of the proteins that bind and probably mediate the attachment of the 5S RNA into the large ribosomal subunit, where it forms part of the central protuberance. In the 70S ribosome it contacts protein S13 of the 30S subunit (bridge B1b), connecting the 2 subunits; this bridge is implicated in subunit movement. Contacts the P site tRNA; the 5S rRNA and some of its associated proteins might help stabilize positioning of ribosome-bound tRNAs. The protein is Large ribosomal subunit protein uL5 of Geobacter sp. (strain M21).